The primary structure comprises 419 residues: L-rhamnose isomerase (419 aa).

The Mn(2+) site is built by H262, D294, and D296.

The protein belongs to the rhamnose isomerase family. Homotetramer. The cofactor is Mn(2+).

The protein resides in the cytoplasm. The enzyme catalyses L-rhamnopyranose = L-rhamnulose. It participates in carbohydrate degradation; L-rhamnose degradation; glycerone phosphate from L-rhamnose: step 1/3. Its function is as follows. Catalyzes the interconversion of L-rhamnose and L-rhamnulose. The chain is L-rhamnose isomerase from Escherichia coli (strain 55989 / EAEC).